The primary structure comprises 84 residues: Defensin-like protein 116 (84 aa).

A signal peptide spans 1–24; sequence MAITKNMLVVLLLTIIFVTSSVHC. Disulfide bonds link cysteine 40-cysteine 80, cysteine 46-cysteine 71, cysteine 55-cysteine 78, and cysteine 59-cysteine 79.

The protein belongs to the DEFL family.

It localises to the secreted. The sequence is that of Defensin-like protein 116 from Arabidopsis thaliana (Mouse-ear cress).